Here is a 294-residue protein sequence, read N- to C-terminus: Probable ABC transporter permease protein YqgI (294 aa).

The next 6 helical transmembrane spans lie at 14 to 34, 66 to 86, 99 to 121, 126 to 148, 190 to 210, and 260 to 280; these read FGLCAAIIAAILVGLFSYIII, FYILFITMLITIPLGVGGGVF, FIRTCIEVLSSLPSIVIGMFGLL, LTGWGYTIIGGALALTVFNLPVM, IITGAILASGRVFGEAAALLF, and AIANGGSAVLVISVLVFNLAA. The ABC transmembrane type-1 domain occupies 62–280; the sequence is LFNSFYILFI…ISVLVFNLAA (219 aa).

It belongs to the binding-protein-dependent transport system permease family. CysTW subfamily.

It localises to the cell membrane. Part of the binding-protein-dependent transport system YqgGHIJK. Probably responsible for the translocation of the substrate across the membrane. This is Probable ABC transporter permease protein YqgI (yqgI) from Bacillus subtilis (strain 168).